A 68-amino-acid polypeptide reads, in one-letter code: MAFLKKSLFLVLFLGLVSLSVCEEEKRENEEEKNEQEEDDREERNEEKRLLGMIPLAISAISSLSKLG.

The signal sequence occupies residues 1-22; the sequence is MAFLKKSLFLVLFLGLVSLSVC. A propeptide spanning residues 23–48 is cleaved from the precursor; the sequence is EEEKRENEEEKNEQEEDDREERNEEK. The interval 25–47 is disordered; sequence EKRENEEEKNEQEEDDREERNEE. Residues 31-41 are compositionally biased toward acidic residues; sequence EEKNEQEEDDR. Leucine 67 carries the leucine amide modification.

It belongs to the frog skin active peptide (FSAP) family. Medusin subfamily. As to expression, expressed by the skin glands.

The protein resides in the secreted. Functionally, antimicrobial peptide with activity against Gram-positive bacteria (S.aureus, MIC=32 mg/L) and fungi (C.albicans, MIC=64 mg/L). Shows weak hemolytic activity. The polypeptide is Medusin-DA1 (Agalychnis dacnicolor (Giant Mexican leaf frog)).